A 432-amino-acid polypeptide reads, in one-letter code: Neuronal pentraxin-1 (432 aa).

The signal sequence occupies residues 1–22; sequence MLAGRAARTCALLALCLLGSGA. A disordered region spans residues 88-122; the sequence is RCESQSTLDSGPGEARSGGGRKQPGSGKNTMGDLS. N-linked (GlcNAc...) asparagine glycosylation is found at asparagine 154 and asparagine 193. The Pentraxin (PTX) domain occupies 226-428; sequence DKFQLTFPLR…GATKWTFEAC (203 aa). A disulfide bond links cysteine 256 and cysteine 316. Residues asparagine 280, glutamate 358, glutamine 359, aspartate 360, and glutamine 370 each contribute to the Ca(2+) site.

Homooligomer or heterooligomer (probably pentamer) with neuronal pentraxin receptor (NPTXR). Requires Ca(2+) as cofactor. As to expression, expressed in brain and kidney.

Its subcellular location is the secreted. The protein resides in the cytoplasmic vesicle. The protein localises to the secretory vesicle. It localises to the endoplasmic reticulum. In terms of biological role, may be involved in mediating uptake of synaptic material during synapse remodeling or in mediating the synaptic clustering of AMPA glutamate receptors at a subset of excitatory synapses. This Mus musculus (Mouse) protein is Neuronal pentraxin-1 (Nptx1).